An 832-amino-acid polypeptide reads, in one-letter code: AP-1 complex subunit gamma-1 (832 aa).

The GAE domain maps to 733-832 (LNVYASLLSA…QFDHKFDETL (100 aa)).

As to quaternary structure, adapter protein complex 1 (AP-1) is a heterotetramer composed of two large adaptins (gamma-type subunit APL4 and beta-type subunit APL2), a medium adaptin (mu-type subunit APM1) and a small adaptin (sigma-type subunit APS1). AP-1 interacts with clathrin. Also a component of the AP-1R complex composed of at least APM2, APL4 and APS1.

It is found in the cytoplasm. Its subcellular location is the golgi apparatus membrane. The protein localises to the cytoplasmic vesicle. The protein resides in the clathrin-coated vesicle membrane. In terms of biological role, adaptins are components of the adapter complexes which link clathrin to receptors in coated vesicles. Clathrin-associated protein complexes are believed to interact with the cytoplasmic tails of membrane proteins, leading to their selection and concentration. The AP-1 complex interacts directly with clathrin. Component of the AP-1-related (AP-1R) complex, an adapter protein complex that mediates sorting of cargo SNARE SNC1. In contrast to the APM1-containing AP-1 complex, AP-1R is incapable of sorting CHS3. The polypeptide is AP-1 complex subunit gamma-1 (APL4) (Saccharomyces cerevisiae (strain ATCC 204508 / S288c) (Baker's yeast)).